The chain runs to 368 residues: Inner kinetochore subunit MCM21 (368 aa).

Residues 1 to 43 (MSRIDDLQQDIESLLSEINSLEESREKLKAKIKDKRKNEESAN) adopt a coiled-coil conformation. The residue at position 88 (T88) is a Phosphothreonine.

The protein belongs to the CENP-O/MCM21 family. In terms of assembly, component of the heterotetrameric kinetochore subcomplex COMA, which consists of AME1, CTF19, MCM21 and OKP1. The COMA subcomplex is part of a larger constitutive centromere-associated network (CCAN) (also known as central kinetochore CTF19 complex in yeast), which is composed of at least AME1, CHL4, CNN1, CTF3, CTF19, IML3, MCM16, MCM21, MCM22, MHF1, MHF2, MIF2, NKP1, NKP2, OKP1 and WIP1. COMA binds the centromeric nucleosome-binding protein MIF2, and to the outer kinetochore MIND subcomplex.

Its subcellular location is the nucleus. The protein localises to the chromosome. It is found in the centromere. The protein resides in the kinetochore. Functionally, component of the kinetochore, a multiprotein complex that assembles on centromeric DNA and attaches chromosomes to spindle microtubules, mediating chromosome segregation and sister chromatid segregation during meiosis and mitosis. Component of the inner kinetochore COMA complex, which connects centromere-associated proteins and the outer kinetochore. COMA interacts with other inner kinetochore proteins to form the inner kinetochore constitutive centromere-associated network (CCAN), which serves as a structural platform for outer kinetochore assembly. The polypeptide is Inner kinetochore subunit MCM21 (MCM21) (Saccharomyces cerevisiae (strain ATCC 204508 / S288c) (Baker's yeast)).